Here is a 542-residue protein sequence, read N- to C-terminus: Exopolysaccharide phosphotransferase CpsY (542 aa).

A disordered region spans residues 522 to 542 (SPTVSAPLEDGQTANPAQTAR). Over residues 533–542 (QTANPAQTAR) the composition is skewed to polar residues.

It belongs to the stealth family.

In Mycobacterium leprae (strain TN), this protein is Exopolysaccharide phosphotransferase CpsY (cpsY).